Consider the following 572-residue polypeptide: Glutamate--tRNA ligase (572 aa).

The 'HIGH' region signature appears at 107-117; that stretch reads PNPDGAFHLGN.

This sequence belongs to the class-I aminoacyl-tRNA synthetase family. Glutamate--tRNA ligase type 2 subfamily.

Its subcellular location is the cytoplasm. The enzyme catalyses tRNA(Glu) + L-glutamate + ATP = L-glutamyl-tRNA(Glu) + AMP + diphosphate. Its function is as follows. Catalyzes the attachment of glutamate to tRNA(Glu) in a two-step reaction: glutamate is first activated by ATP to form Glu-AMP and then transferred to the acceptor end of tRNA(Glu). The protein is Glutamate--tRNA ligase of Pyrococcus furiosus (strain ATCC 43587 / DSM 3638 / JCM 8422 / Vc1).